We begin with the raw amino-acid sequence, 116 residues long: Cocaine- and amphetamine-regulated transcript protein (116 aa).

Residues 1 to 27 (MESSRVRLLPLLGAALLLMLPLLGTRA) form the signal peptide. At Tyr41 the chain carries Phosphotyrosine. Ser48 is modified (phosphoserine). 3 cysteine pairs are disulfide-bonded: Cys82/Cys100, Cys88/Cys108, and Cys102/Cys115.

This sequence belongs to the CART family. Hypothalamus. Found in neurons of the ventrolateral part of the arcuate nucleus, in the external zone of the median eminence, and also found in terminals in the periventricular part of the paraventricular nucleus.

It is found in the secreted. Functionally, satiety factor closely associated with the actions of leptin and neuropeptide Y; this anorectic peptide inhibits both normal and starvation-induced feeding and completely blocks the feeding response induced by neuropeptide Y and regulated by leptin in the hypothalamus. It promotes neuronal development and survival in vitro. In Homo sapiens (Human), this protein is Cocaine- and amphetamine-regulated transcript protein (CARTPT).